A 115-amino-acid chain; its full sequence is Phosphoribosyl-ATP pyrophosphatase (115 aa).

This sequence belongs to the PRA-PH family.

The protein resides in the cytoplasm. It catalyses the reaction 1-(5-phospho-beta-D-ribosyl)-ATP + H2O = 1-(5-phospho-beta-D-ribosyl)-5'-AMP + diphosphate + H(+). It participates in amino-acid biosynthesis; L-histidine biosynthesis; L-histidine from 5-phospho-alpha-D-ribose 1-diphosphate: step 2/9. The protein is Phosphoribosyl-ATP pyrophosphatase of Bordetella bronchiseptica (strain ATCC BAA-588 / NCTC 13252 / RB50) (Alcaligenes bronchisepticus).